The chain runs to 456 residues: Argininosuccinate lyase (456 aa).

Belongs to the lyase 1 family. Argininosuccinate lyase subfamily.

The protein resides in the cytoplasm. It carries out the reaction 2-(N(omega)-L-arginino)succinate = fumarate + L-arginine. The protein operates within amino-acid biosynthesis; L-arginine biosynthesis; L-arginine from L-ornithine and carbamoyl phosphate: step 3/3. The chain is Argininosuccinate lyase from Listeria monocytogenes serotype 4b (strain F2365).